We begin with the raw amino-acid sequence, 230 residues long: Ion-translocating oxidoreductase complex subunit E (230 aa).

Transmembrane regions (helical) follow at residues 18 to 38 (ALVQ…ATNA), 39 to 59 (LGLG…ISTL), 63 to 83 (TPTE…VSAV), 86 to 106 (LINA…PLIV), 128 to 148 (ALDG…LGAM), and 182 to 202 (PFLL…MLAG).

Belongs to the NqrDE/RnfAE family. In terms of assembly, the complex is composed of six subunits: RsxA, RsxB, RsxC, RsxD, RsxE and RsxG.

The protein localises to the cell inner membrane. In terms of biological role, part of a membrane-bound complex that couples electron transfer with translocation of ions across the membrane. Required to maintain the reduced state of SoxR. In Escherichia fergusonii (strain ATCC 35469 / DSM 13698 / CCUG 18766 / IAM 14443 / JCM 21226 / LMG 7866 / NBRC 102419 / NCTC 12128 / CDC 0568-73), this protein is Ion-translocating oxidoreductase complex subunit E.